Consider the following 203-residue polypeptide: Pacifastin-like protease inhibitor cvp4 (203 aa).

Positions 1 to 19 are cleaved as a signal peptide; sequence MGFLACALLVVATAHAATA. 3 consecutive Pacifastin domains span residues 23–59, 85–121, and 147–184; these read PETCEIGSNFKNYCNNCYCFDGVMDHALCTRESCDRN, DEPCTPGENFKYYCNDCQCLDGLRAHAMCTRMRCDRN, and DESCAPGASFKYYCNSCTCGAEGKVAEAQCTSQECDRY. Disulfide bonds link Cys-26–Cys-41, Cys-36–Cys-56, Cys-39–Cys-51, Cys-88–Cys-103, Cys-98–Cys-118, and Cys-101–Cys-113. The span at 129–148 shows a compositional bias: basic and acidic residues; it reads RKYPEPEKWNSEKERKKSDE. Positions 129-150 are disordered; the sequence is RKYPEPEKWNSEKERKKSDESC. Cystine bridges form between Cys-150/Cys-165, Cys-160/Cys-181, and Cys-163/Cys-176.

It belongs to the protease inhibitor I19 family. Expressed by the venom gland.

It localises to the secreted. Inhibits trypsin activity and prophenoloxidase (PPO) activation, an enzyme essential for both clotting and insect innate immune responses. It does not inhibit activity of chymotrypsin and protease K, and has no effect on phenoloxidase (PO) activity. This Pimpla hypochondriaca (Parasitoid wasp) protein is Pacifastin-like protease inhibitor cvp4.